Consider the following 347-residue polypeptide: NADH-ubiquinone oxidoreductase chain 2 (347 aa).

11 helical membrane-spanning segments follow: residues 1–21 (MNPLIFTTIVLTIIMGTMIVM), 25–45 (HWLTVWIGFEMNMLAVIPILM), 59–79 (YFLTQATASMLLMLAIIINLL), 96–116 (IIMTLAMAMKLGLSPFHFWVP), 122–142 (IQLSSGLILLTWQKLAPMSIL), 145–165 (IFPTINLNLMLLMSVLSVAIG), 178–198 (IMAYSSIAHMGWMTAIMAYNP), 201–221 (TLLNLVIYILLTTTTFMMFML), 237–257 (APLLTMTILTIMLSMGGLPPL), 276–296 (IITPTIMAVTALLNLYFYMRL), and 326–346 (VSPLIILSTLALPLSPILMLL).

Belongs to the complex I subunit 2 family. Core subunit of respiratory chain NADH dehydrogenase (Complex I) which is composed of 45 different subunits. Interacts with TMEM242.

Its subcellular location is the mitochondrion inner membrane. The catalysed reaction is a ubiquinone + NADH + 5 H(+)(in) = a ubiquinol + NAD(+) + 4 H(+)(out). Its function is as follows. Core subunit of the mitochondrial membrane respiratory chain NADH dehydrogenase (Complex I) which catalyzes electron transfer from NADH through the respiratory chain, using ubiquinone as an electron acceptor. Essential for the catalytic activity and assembly of complex I. This chain is NADH-ubiquinone oxidoreductase chain 2, found in Boneia bidens (Manado fruit bat).